Here is a 129-residue protein sequence, read N- to C-terminus: Protein FYV12 (129 aa).

An N-linked (GlcNAc...) asparagine glycan is attached at Asn-91. The chain crosses the membrane as a helical span at residues 109 to 128 (LMTTFLLYVLYVCIYISAFI).

Its subcellular location is the membrane. Its function is as follows. Involved in K1 killer toxin resistance. This Saccharomyces cerevisiae (strain ATCC 204508 / S288c) (Baker's yeast) protein is Protein FYV12 (FYV12).